Reading from the N-terminus, the 67-residue chain is uncharacterized protein (67 aa).

This is an uncharacterized protein from Bacillus subtilis (strain 168).